We begin with the raw amino-acid sequence, 349 residues long: Small ribosomal subunit biogenesis GTPase RsgA (349 aa).

The segment covering 1-11 has biased composition (basic residues); it reads MSKKKLSKGQQ. A disordered region spans residues 1 to 29; the sequence is MSKKKLSKGQQRRVSANHQRRLKKTESKV. One can recognise a CP-type G domain in the interval 102-272; the sequence is HSVLTRPDYY…VIDSPGVREF (171 aa). GTP is bound by residues 158–161 and 212–220; these read NKID and GQSGVGKSS. Cys-296, Cys-301, His-303, and Cys-309 together coordinate Zn(2+).

This sequence belongs to the TRAFAC class YlqF/YawG GTPase family. RsgA subfamily. Monomer. Associates with 30S ribosomal subunit, binds 16S rRNA. Zn(2+) serves as cofactor.

Its subcellular location is the cytoplasm. Its function is as follows. One of several proteins that assist in the late maturation steps of the functional core of the 30S ribosomal subunit. Helps release RbfA from mature subunits. May play a role in the assembly of ribosomal proteins into the subunit. Circularly permuted GTPase that catalyzes slow GTP hydrolysis, GTPase activity is stimulated by the 30S ribosomal subunit. The polypeptide is Small ribosomal subunit biogenesis GTPase RsgA (Pectobacterium carotovorum subsp. carotovorum (strain PC1)).